The chain runs to 92 residues: Small ribosomal subunit protein uS19c (92 aa).

The protein belongs to the universal ribosomal protein uS19 family.

It localises to the plastid. The protein resides in the chloroplast. Its function is as follows. Protein S19 forms a complex with S13 that binds strongly to the 16S ribosomal RNA. The protein is Small ribosomal subunit protein uS19c of Cyanidium caldarium (Red alga).